We begin with the raw amino-acid sequence, 478 residues long: Alpha-(1,3)-fucosyltransferase FucT (478 aa).

Residues G94, 186–189, R195, 222–225, N240, and 246–250 contribute to the substrate site; these read VASN, VKNK, and YVTEK. An important for acceptor specificity region spans residues 347-353; it reads DNPFIFC. Tandem repeats lie at residues 364–370, 371–377, 378–384, 385–391, 392–398, 399–405, 406–412, 413–419, 420–426, and 427–433. Positions 364 to 433 are 10 X 7 AA tandem repeat of D-D-L-R-[IV]-N-Y; it reads DDLRVNYDDL…VNYDDLRVNY (70 aa). The segment at 434-478 is may be involved in membrane binding; sequence ERLLSKATPLLELSQNTTSKIYRKAYQKSLPLLRAIRRWVKKLGL.

This sequence belongs to the glycosyltransferase 10 family. Homodimer.

It is found in the membrane. It localises to the cytoplasm. It carries out the reaction a beta-D-galactosyl-(1-&gt;4)-N-acetyl-beta-D-glucosaminyl derivative + GDP-beta-L-fucose = a beta-D-galactosyl-(1-&gt;4)-[alpha-L-fucosyl-(1-&gt;3)]-N-acetyl-beta-D-glucosaminyl derivative + GDP + H(+). It functions in the pathway lipopolysaccharide biosynthesis; LPS oligosaccharide biosynthesis. Its function is as follows. Involved in the biosynthesis of the Lewis X (LeX) trisaccharide of the lipopolysaccharide (LPS) O-antigen. Catalyzes the addition of fucose in alpha 1-3 linkage to Gal-beta-1-4-GlcNAc-beta-O-R (LacNAc-R) type II acceptor. This is Alpha-(1,3)-fucosyltransferase FucT from Helicobacter pylori (Campylobacter pylori).